Reading from the N-terminus, the 372-residue chain is MRSIIADSKRLVVKVGSSLVTNDGKGLDHAAIGRWAAQIAALRAQGKEVVLVSSGAIAEGMQRLGWSKRPREIDELQAAAAVGQMGLAQVYESRFTEHGIRTAQILLTHADLADRERYLNARSTLLTLLRLGVVPIINENDTVVTDEIKFGDNDTLGALVANLIEGDALIILTDQSGLFTADPRKDPNATLVGEANAGAPELEAMAGGAGSSLGRGGMLTKILAAKRAAHSGANTVIASGREADVLVRLAAGEAIGTQLIARTARMAARKQWMADHLQVRGHVVIDAGAVEKLTAGGKSLLPIGVIDVQGAFARGEVIACVGPDGREVARGLTNYSSAETKLIHRKPSGEIEIVLGYMLEPELIHRDNLVLV.

Lys14 is an ATP binding site. 3 residues coordinate substrate: Ser54, Asp141, and Asn153. Residue 173–174 (TD) participates in ATP binding. In terms of domain architecture, PUA spans 280-358 (RGHVVIDAGA…GEIEIVLGYM (79 aa)).

This sequence belongs to the glutamate 5-kinase family.

It is found in the cytoplasm. The catalysed reaction is L-glutamate + ATP = L-glutamyl 5-phosphate + ADP. The protein operates within amino-acid biosynthesis; L-proline biosynthesis; L-glutamate 5-semialdehyde from L-glutamate: step 1/2. Functionally, catalyzes the transfer of a phosphate group to glutamate to form L-glutamate 5-phosphate. This is Glutamate 5-kinase from Burkholderia orbicola (strain MC0-3).